The sequence spans 810 residues: Fibroblast growth factor receptor 1-A (810 aa).

The N-terminal stretch at 1–26 is a signal peptide; the sequence is MKMMMIMKTTLLLISVLLTQALQSQG. Residues 27-363 lie on the Extracellular side of the membrane; that stretch reads RPAIQDEAPA…TQLPNQTYLE (337 aa). 3 Ig-like C2-type domains span residues 28-115, 147-235, and 244-346; these read PAIQ…FNIS, PDKM…YQLD, and PILQ…AWLT. C53 and C99 form a disulfide bridge. N-linked (GlcNAc...) asparagine glycans are attached at residues N107, N113, N216, N229, N253, N285, N306, N319, and N358. A disulfide bridge links C167 with C219. A disulfide bridge links C266 with C330. The helical transmembrane segment at 364-384 threads the bilayer; that stretch reads VLIYCVGFFLICVMVGTAVLA. Residues 385-810 lie on the Cytoplasmic side of the membrane; the sequence is KMHSSAKKSD…PNRGVAFKKR (426 aa). Y450 is modified (phosphotyrosine; by autocatalysis). The 290-residue stretch at 465–754 folds into the Protein kinase domain; sequence LVLGKPLGEG…LSMTSNQEYL (290 aa). ATP-binding positions include 471-477, K501, 549-551, and N555; these read LGEGCFG and EFA. Phosphotyrosine; by autocatalysis is present on residues Y570 and Y572. Residue D610 is the Proton acceptor of the active site. Residues R614 and D628 each contribute to the ATP site. Phosphotyrosine; by autocatalysis is present on residues Y640, Y641, Y717, and Y753. The interval 787–810 is disordered; sequence AGADEPCLPKFPPHPNRGVAFKKR.

This sequence belongs to the protein kinase superfamily. Tyr protein kinase family. Fibroblast growth factor receptor subfamily. Monomer. Homodimer after ligand binding. Interacts with cnpy1. In terms of processing, autophosphorylated. Binding of FGF family members together with heparan sulfate proteoglycan or heparin promotes receptor dimerization and autophosphorylation on tyrosine residues. Autophosphorylation occurs in trans between the two FGFR molecules present in the dimer and proceeds in a highly ordered manner. Phosphotyrosine residues provide docking sites for interacting proteins and so are crucial for FGFR1 function and its regulation. Post-translationally, ubiquitinated. FGFR1 is rapidly ubiquitinated after autophosphorylation, leading to internalization and degradation. N-glycosylated in the endoplasmic reticulum. The N-glycan chains undergo further maturation to an Endo H-resistant form in the Golgi apparatus. As to expression, initially expressed in adaxial mesoderm with transcripts distinctly localized to the anterior portion of each half-somite. Hereupon, also strongly expressed in the otic vesicles, branchial arches and the brain, especially at the midbrain-hindbrain boundary (MHB).

It is found in the cell membrane. The protein resides in the nucleus. It localises to the cytoplasm. Its subcellular location is the cytosol. The protein localises to the cytoplasmic vesicle. It catalyses the reaction L-tyrosyl-[protein] + ATP = O-phospho-L-tyrosyl-[protein] + ADP + H(+). Its activity is regulated as follows. Present in an inactive conformation in the absence of bound ligand. Ligand binding leads to dimerization and activation by sequential autophosphorylation on tyrosine residues. Tyrosine-protein kinase that acts as a cell-surface receptor for fibroblast growth factors and plays an essential role in the regulation of embryonic development, cell proliferation, differentiation and migration. Required for normal mesoderm patterning and normal skeletogenesis. Phosphorylates PLCG1, FRS2, GAB1 and SHB. Ligand binding leads to the activation of several signaling cascades. Activation of PLCG1 leads to the production of the cellular signaling molecules diacylglycerol and inositol-1,4,5-trisphosphate. Phosphorylation of FRS2 triggers recruitment of GRB2, GAB1, PIK3R1 and SOS1, and mediates activation of RAS, MAPK1/ERK2, MAPK3/ERK1 and the MAP kinase signaling pathway, as well as of the AKT1 signaling pathway. Promotes phosphorylation of SHC1, STAT1 and PTPN11/SHP2. In the nucleus, enhances RPS6KA1 and CREB1 activity and contributes to the regulation of transcription. FGFR1 signaling is down-regulated by ubiquitination, internalization and degradation. This chain is Fibroblast growth factor receptor 1-A (fgfr1a), found in Danio rerio (Zebrafish).